Consider the following 424-residue polypeptide: Histidine--tRNA ligase (424 aa).

Belongs to the class-II aminoacyl-tRNA synthetase family. As to quaternary structure, homodimer.

Its subcellular location is the cytoplasm. The enzyme catalyses tRNA(His) + L-histidine + ATP = L-histidyl-tRNA(His) + AMP + diphosphate + H(+). This chain is Histidine--tRNA ligase, found in Escherichia coli (strain SE11).